A 668-amino-acid chain; its full sequence is DNA ligase (668 aa).

NAD(+) is bound by residues 35–39 (DQEYD), 84–85 (SL), and glutamate 115. The active-site N6-AMP-lysine intermediate is the lysine 117. NAD(+)-binding residues include arginine 138, glutamate 172, lysine 288, and lysine 312. Zn(2+)-binding residues include cysteine 406, cysteine 409, cysteine 425, and cysteine 430. The region spanning 589 to 668 (KLEGPLKGLV…EEFFDKYGES (80 aa)) is the BRCT domain.

This sequence belongs to the NAD-dependent DNA ligase family. LigA subfamily. Mg(2+) is required as a cofactor. Mn(2+) serves as cofactor.

It catalyses the reaction NAD(+) + (deoxyribonucleotide)n-3'-hydroxyl + 5'-phospho-(deoxyribonucleotide)m = (deoxyribonucleotide)n+m + AMP + beta-nicotinamide D-nucleotide.. Its function is as follows. DNA ligase that catalyzes the formation of phosphodiester linkages between 5'-phosphoryl and 3'-hydroxyl groups in double-stranded DNA using NAD as a coenzyme and as the energy source for the reaction. It is essential for DNA replication and repair of damaged DNA. The protein is DNA ligase of Petrotoga mobilis (strain DSM 10674 / SJ95).